The chain runs to 324 residues: Fructose-1,6-bisphosphatase class 1 (324 aa).

Residues E88, D107, L109, and D110 each contribute to the Mg(2+) site. Substrate is bound by residues D110–S113, N199, and K265. Position 271 (E271) interacts with Mg(2+).

Belongs to the FBPase class 1 family. In terms of assembly, homotetramer. It depends on Mg(2+) as a cofactor.

The protein resides in the cytoplasm. The enzyme catalyses beta-D-fructose 1,6-bisphosphate + H2O = beta-D-fructose 6-phosphate + phosphate. It participates in carbohydrate biosynthesis; gluconeogenesis. The sequence is that of Fructose-1,6-bisphosphatase class 1 from Neisseria meningitidis serogroup C (strain 053442).